The sequence spans 208 residues: 3,4-dihydroxy-2-butanone 4-phosphate synthase (208 aa).

Position 3 is a phosphothreonine (Thr3). Mg(2+) is bound at residue Glu27. D-ribulose 5-phosphate is bound at residue Asp31. At Cys56 the chain carries S-glutathionyl cysteine; by GRX2. D-ribulose 5-phosphate contacts are provided by residues Thr88 and 145 to 149 (RRGHT). His148 serves as a coordination point for Mg(2+).

This sequence belongs to the DHBP synthase family. In terms of assembly, homodimer. The cofactor is Mg(2+). Mn(2+) serves as cofactor. In terms of processing, S-glutathionylation of Cys-56 is reversible and dependent on the cytoplasmic isoform of glutaredoxin-2.

The protein resides in the cytoplasm. It is found in the nucleus. Its subcellular location is the mitochondrion intermembrane space. The catalysed reaction is D-ribulose 5-phosphate = (2S)-2-hydroxy-3-oxobutyl phosphate + formate + H(+). Its pathway is cofactor biosynthesis; riboflavin biosynthesis; 2-hydroxy-3-oxobutyl phosphate from D-ribulose 5-phosphate: step 1/1. In terms of biological role, catalyzes the conversion of D-ribulose 5-phosphate to formate and 3,4-dihydroxy-2-butanone 4-phosphate. Also has an unrelated function in expression of mitochondrial respiration. This is 3,4-dihydroxy-2-butanone 4-phosphate synthase (RIB3) from Saccharomyces cerevisiae (strain ATCC 204508 / S288c) (Baker's yeast).